The primary structure comprises 1164 residues: Auxin response factor 7 (1164 aa).

A DNA-binding region (TF-B3) is located at residues 127 to 229 (FCKTLTASDT…QLLLGIRRAN (103 aa)). Disordered stretches follow at residues 451-505 (HNNL…QQQL), 536-555 (QQLQSQQHSNNNQSQSQQQQ), 570-728 (HQQP…LLQQ), 765-858 (FLSP…SSSG), and 903-930 (KSKASLTDHQLEASASGTSYGLDGGENN). A compositionally biased stretch (polar residues) spans 464 to 489 (LSFQTPHGGISSSNLQFNKQNQQAPM). Residues 570 to 635 (HQQPLQQQTQ…SQQASTHHLQ (66 aa)) show a composition bias toward low complexity. A compositionally biased stretch (polar residues) spans 637 to 651 (QLVSGSMASSVITPP). Over residues 652–671 (SSSLNQSFQQQQQQSKQLQQ) the composition is skewed to low complexity. A compositionally biased stretch (polar residues) spans 678–710 (ASTSQSSVIETSKSSSNLMSAPPQETQFSRQVE). Low complexity-rich tracts occupy residues 711–728 (QQQPPGLNGQNQQTLLQQ) and 765–790 (FLSPQSQLPHHQLQSQQLQQLPTLSQ). A compositionally biased stretch (polar residues) spans 791-808 (GHQFPSSCTNNGLSTLQP). Residues 841–851 (PSSSTSPSTNN) show a composition bias toward low complexity. Polar residues predominate over residues 903-921 (KSKASLTDHQLEASASGTS). Residues 1037-1130 (RTYTKVQKRG…EVQQMSLDGN (94 aa)) form the PB1 domain. Positions 1145-1164 (DSGNAWRGHYDDNSATSFNR) are disordered.

The protein belongs to the ARF family. As to quaternary structure, homodimers and heterodimers. Interacts with the auxin-responsive proteins IAA1 and IAA12 (BODENLOS). Interacts (via PB1 domain) with IAA17 (via PB1 domain). Interacts with IAA19. Interacts with ARF5. Binds to JMJ30. Binds to ATXR2 in the nucleus. In terms of tissue distribution, expressed in the whole plant.

The protein resides in the nucleus. Functionally, auxin response factors (ARFs) are transcriptional factors that bind specifically to the DNA sequence 5'-TGTCTC-3' found in the auxin-responsive promoter elements (AuxREs). Acts as a transcriptional activator of several tropic stimulus-induced (TSI) genes, including SAUR50. Formation of heterodimers with Aux/IAA proteins may alter their ability to modulate early auxin response genes expression. Required for differential growth responses of aerial tissues. Involved in ethylene responses. Regulates lateral root formation through direct regulation of LBD16 and/or LBD29. Functionally redundant with ARF19. Mediates embryo axis formation and vascular tissues differentiation. Functionally redundant with ARF5. Involved in cellular dedifferentiation during callus formation on callus-inducing medium (CIM) and in an ATXR2-dependent manner. The protein is Auxin response factor 7 of Arabidopsis thaliana (Mouse-ear cress).